Here is a 134-residue protein sequence, read N- to C-terminus: DNA-binding protein H-NS homolog (134 aa).

The disordered stretch occupies residues His106–Ile134. The DNA-binding element occupies Gln112–Arg117.

Belongs to the histone-like protein H-NS family. Homodimer that oligomerizes on DNA into higher-order complexes that form bridges between disparate regions of DNA compacting it.

The protein resides in the cytoplasm. It is found in the nucleoid. A DNA-binding protein implicated in transcriptional repression and chromosome organization and compaction. Binds nucleation sites in AT-rich DNA and bridges them, forming higher-order nucleoprotein complexes and condensing the chromosome. As many horizontally transferred genes are AT-rich, it plays a central role in silencing foreign genes. A subset of genes are repressed by H-NS in association with other proteins. The protein is DNA-binding protein H-NS homolog (hns) of Haemophilus influenzae (strain ATCC 51907 / DSM 11121 / KW20 / Rd).